A 294-amino-acid polypeptide reads, in one-letter code: Elongation factor Ts (294 aa).

The interval 80-83 is involved in Mg(2+) ion dislocation from EF-Tu; that stretch reads TDFV.

This sequence belongs to the EF-Ts family.

The protein localises to the cytoplasm. Associates with the EF-Tu.GDP complex and induces the exchange of GDP to GTP. It remains bound to the aminoacyl-tRNA.EF-Tu.GTP complex up to the GTP hydrolysis stage on the ribosome. In Listeria monocytogenes serovar 1/2a (strain ATCC BAA-679 / EGD-e), this protein is Elongation factor Ts.